A 61-amino-acid chain; its full sequence is Photosystem II reaction center protein K (61 aa).

Positions 1–24 are excised as a propeptide; sequence MLNIFNLICICFNSALFSSTFLVA. The helical transmembrane segment at 40–60 threads the bilayer; that stretch reads MPVIPLFFLLLAFVWQAAVSF.

The protein belongs to the PsbK family. PSII is composed of 1 copy each of membrane proteins PsbA, PsbB, PsbC, PsbD, PsbE, PsbF, PsbH, PsbI, PsbJ, PsbK, PsbL, PsbM, PsbT, PsbX, PsbY, PsbZ, Psb30/Ycf12, at least 3 peripheral proteins of the oxygen-evolving complex and a large number of cofactors. It forms dimeric complexes.

It localises to the plastid. It is found in the chloroplast thylakoid membrane. Its function is as follows. One of the components of the core complex of photosystem II (PSII). PSII is a light-driven water:plastoquinone oxidoreductase that uses light energy to abstract electrons from H(2)O, generating O(2) and a proton gradient subsequently used for ATP formation. It consists of a core antenna complex that captures photons, and an electron transfer chain that converts photonic excitation into a charge separation. This is Photosystem II reaction center protein K from Sinapis alba (White mustard).